A 375-amino-acid chain; its full sequence is Queuine tRNA-ribosyltransferase (375 aa).

The active-site Proton acceptor is aspartate 89. Residues 89–93, aspartate 143, glutamine 185, and glycine 212 each bind substrate; that span reads DSGGF. Residues 243–249 form an RNA binding region; sequence GVGKPED. The Nucleophile role is filled by aspartate 262. An RNA binding; important for wobble base 34 recognition region spans residues 267–271; it reads TRNAR. The Zn(2+) site is built by cysteine 300, cysteine 302, cysteine 305, and histidine 331.

The protein belongs to the queuine tRNA-ribosyltransferase family. Homodimer. Within each dimer, one monomer is responsible for RNA recognition and catalysis, while the other monomer binds to the replacement base PreQ1. It depends on Zn(2+) as a cofactor.

The catalysed reaction is 7-aminomethyl-7-carbaguanine + guanosine(34) in tRNA = 7-aminomethyl-7-carbaguanosine(34) in tRNA + guanine. Its pathway is tRNA modification; tRNA-queuosine biosynthesis. Its function is as follows. Catalyzes the base-exchange of a guanine (G) residue with the queuine precursor 7-aminomethyl-7-deazaguanine (PreQ1) at position 34 (anticodon wobble position) in tRNAs with GU(N) anticodons (tRNA-Asp, -Asn, -His and -Tyr). Catalysis occurs through a double-displacement mechanism. The nucleophile active site attacks the C1' of nucleotide 34 to detach the guanine base from the RNA, forming a covalent enzyme-RNA intermediate. The proton acceptor active site deprotonates the incoming PreQ1, allowing a nucleophilic attack on the C1' of the ribose to form the product. After dissociation, two additional enzymatic reactions on the tRNA convert PreQ1 to queuine (Q), resulting in the hypermodified nucleoside queuosine (7-(((4,5-cis-dihydroxy-2-cyclopenten-1-yl)amino)methyl)-7-deazaguanosine). This is Queuine tRNA-ribosyltransferase from Pseudoalteromonas translucida (strain TAC 125).